The sequence spans 956 residues: Calsyntenin-3 (956 aa).

The N-terminal stretch at 1–20 (MARMSFLSFLLFCLTSVAHG) is a signal peptide. The Extracellular portion of the chain corresponds to 21 to 850 (NKANKHKPWI…PHRNSVVPGA (830 aa)). Cadherin domains follow at residues 30-151 (IETE…SPVF) and 152-271 (VERR…IPLF). Asn-333, Asn-353, Asn-513, and Asn-743 each carry an N-linked (GlcNAc...) asparagine glycan. The chain crosses the membrane as a helical span at residues 851-871 (ATVIIMVCVGFLVVMVILGVF). Topologically, residues 872–956 (RIRSIHRRGE…EGRDSAPRRY (85 aa)) are cytoplasmic. The span at 921-937 (GECEDEEEVVDSPDDTS) shows a compositional bias: acidic residues. Residues 921 to 956 (GECEDEEEVVDSPDDTSDDQRIIIKKEGRDSAPRRY) are disordered. Positions 938-956 (DDQRIIIKKEGRDSAPRRY) are enriched in basic and acidic residues.

Belongs to the calsyntenin family. In terms of assembly, homooligomer and heterooligomer; mediates both homophilic and heterophilc interactions with clstn1 and clstn2 paralogs via cadherin domains. Interacts (via cadherin domains) with both alpha and beta isoforms of neurexins. As to expression, by 48 hours post-fertilization (hpf), widely expressed in the brain, with strong expression in the telencephalon and the midbrain. Not expressed in the optic tectum.

It is found in the postsynaptic cell membrane. The protein localises to the endoplasmic reticulum membrane. The protein resides in the golgi apparatus membrane. In terms of biological role, synaptic adhesion molecule. Promotes synapse development by acting as a cell adhesion molecule at the postsynaptic membrane, which associates with presynaptic neurexins. The sequence is that of Calsyntenin-3 from Danio rerio (Zebrafish).